We begin with the raw amino-acid sequence, 215 residues long: LexA repressor (215 aa).

The H-T-H motif DNA-binding region spans 28 to 48 (RAEIAAELGFSSPNAAEEHLR). Residues serine 133 and lysine 170 each act as for autocatalytic cleavage activity in the active site.

The protein belongs to the peptidase S24 family. Homodimer.

The enzyme catalyses Hydrolysis of Ala-|-Gly bond in repressor LexA.. Its function is as follows. Represses a number of genes involved in the response to DNA damage (SOS response), including recA and lexA. In the presence of single-stranded DNA, RecA interacts with LexA causing an autocatalytic cleavage which disrupts the DNA-binding part of LexA, leading to derepression of the SOS regulon and eventually DNA repair. This chain is LexA repressor, found in Burkholderia thailandensis (strain ATCC 700388 / DSM 13276 / CCUG 48851 / CIP 106301 / E264).